A 259-amino-acid chain; its full sequence is UPF0246 protein Avin_11220 (259 aa).

The protein belongs to the UPF0246 family.

This Azotobacter vinelandii (strain DJ / ATCC BAA-1303) protein is UPF0246 protein Avin_11220.